The following is a 179-amino-acid chain: Large ribosomal subunit protein uL5 (179 aa).

The protein belongs to the universal ribosomal protein uL5 family. As to quaternary structure, part of the 50S ribosomal subunit; part of the 5S rRNA/L5/L18/L25 subcomplex. Contacts the 5S rRNA and the P site tRNA. Forms a bridge to the 30S subunit in the 70S ribosome.

This is one of the proteins that bind and probably mediate the attachment of the 5S RNA into the large ribosomal subunit, where it forms part of the central protuberance. In the 70S ribosome it contacts protein S13 of the 30S subunit (bridge B1b), connecting the 2 subunits; this bridge is implicated in subunit movement. Contacts the P site tRNA; the 5S rRNA and some of its associated proteins might help stabilize positioning of ribosome-bound tRNAs. The protein is Large ribosomal subunit protein uL5 of Sodalis glossinidius (strain morsitans).